The sequence spans 103 residues: Small ribosomal subunit protein uS14c (103 aa).

The protein belongs to the universal ribosomal protein uS14 family. Part of the 30S ribosomal subunit.

It localises to the plastid. The protein localises to the chloroplast. In terms of biological role, binds 16S rRNA, required for the assembly of 30S particles. The protein is Small ribosomal subunit protein uS14c of Agrostis stolonifera (Creeping bentgrass).